Here is a 219-residue protein sequence, read N- to C-terminus: Redox-sensing transcriptional repressor Rex (219 aa).

A DNA-binding region (H-T-H motif) is located at residues 18–57; that stretch reads LYYRFIQSLYNSGKLRVSSAELSEAVKVDSATIRRDFSYF. NAD(+) is bound at residue 92–97; it reads GVGHLG.

The protein belongs to the transcriptional regulatory Rex family. In terms of assembly, homodimer.

The protein resides in the cytoplasm. In terms of biological role, modulates transcription in response to changes in cellular NADH/NAD(+) redox state. In Exiguobacterium sibiricum (strain DSM 17290 / CCUG 55495 / CIP 109462 / JCM 13490 / 255-15), this protein is Redox-sensing transcriptional repressor Rex.